The sequence spans 134 residues: ATP synthase epsilon chain (134 aa).

The protein belongs to the ATPase epsilon chain family. As to quaternary structure, F-type ATPases have 2 components, CF(1) - the catalytic core - and CF(0) - the membrane proton channel. CF(1) has five subunits: alpha(3), beta(3), gamma(1), delta(1), epsilon(1). CF(0) has three main subunits: a, b and c.

The protein localises to the cell membrane. In terms of biological role, produces ATP from ADP in the presence of a proton gradient across the membrane. This chain is ATP synthase epsilon chain, found in Listeria innocua serovar 6a (strain ATCC BAA-680 / CLIP 11262).